A 997-amino-acid chain; its full sequence is Glutamate [NMDA] receptor subunit 1 (997 aa).

The first 26 residues, 1 to 26, serve as a signal peptide directing secretion; it reads MAMAEFVFCRPLFGLAIVLLVAPIDA. At 27–573 the chain is on the extracellular side; that stretch reads AQRHTASDNP…TLVSFLQPFS (547 aa). Asn258, Asn314, Asn345, Asn397, Asn454, Asn481, and Asn501 each carry an N-linked (GlcNAc...) asparagine glycan. Glycine-binding positions include 530–532 and Arg537; that span reads PLT. A helical transmembrane segment spans residues 574–594; that stretch reads NTLWILVMVSVHVVALVLYLL. Residues 595 to 651 are Cytoplasmic-facing; that stretch reads DRFSPFGRFKLSHSDSNEEKALNLSSAVWFAWGVLLNSGIGEGTPRSFSARVLGMVW. A helical membrane pass occupies residues 652–672; it reads AGFAMIIVASYTANLAAFLVL. At 673–831 the chain is on the extracellular side; that stretch reads ERPKTKLSGI…KTPNTLGLKN (159 aa). Asn693 is a glycosylation site (N-linked (GlcNAc...) asparagine). The glycine site is built by Ser703 and Asp747. The chain crosses the membrane as a helical span at residues 832–852; sequence MAGVFILVGVGIAGGVGLIII. Topologically, residues 853 to 997 are cytoplasmic; the sequence is EVIYKKHQVK…YTSDVSHLVV (145 aa). The disordered stretch occupies residues 970–997; sequence LGKTRPQQSVLPPRYSPGYTSDVSHLVV. Over residues 987 to 997 the composition is skewed to polar residues; that stretch reads GYTSDVSHLVV.

Belongs to the glutamate-gated ion channel (TC 1.A.10.1) family. Forms a heteromeric NMDA channel with Nmdar2. Highly expressed in adult heads: in the brain and ring gland. Low expression throughout the entire brain is also seen. Higher expression levels were observed in some scattered cell bodies and part of their fibers, including those from several pairs of DPM (dorsal-posterior-medial) neurons surrounding the calyx, DAL (dorsal-anterior-lateral) and DPL (dorsal-posterior-lateral) neurons in the lateral protocerebrum (LP), VAL (ventral-anterior-lateral) neurons in the anterior protocerebrum, and two pairs of VP (ventral-posterior) neurons in the posterior protocerebrum. Many cell bodies in the optic lobes show preferential expression. Punctuate expression is notably detected in many brain regions including the superior medial protocerebrum. Weakly expressed in the antennal lobes and central complex.

The protein localises to the cell membrane. The protein resides in the postsynaptic cell membrane. Its subcellular location is the postsynaptic density. Functionally, NMDA receptor subtype of glutamate-gated ion channels with high calcium permeability and voltage-dependent sensitivity to magnesium. Mediated by glycine. This protein plays a key role in synaptic plasticity, synaptogenesis, excitotoxicity, memory acquisition and learning. It mediates neuronal functions in glutamate neurotransmission. Is involved in the cell surface targeting of NMDA receptors. Plays a role in associative learning and in long-term memory consolidation. The chain is Glutamate [NMDA] receptor subunit 1 from Drosophila melanogaster (Fruit fly).